A 285-amino-acid polypeptide reads, in one-letter code: Probable endonuclease 4 (285 aa).

Zn(2+) is bound by residues His69, His109, Glu145, Asp179, His182, His216, Asp229, His231, and Glu261.

The protein belongs to the AP endonuclease 2 family. Zn(2+) serves as cofactor.

It carries out the reaction Endonucleolytic cleavage to 5'-phosphooligonucleotide end-products.. In terms of biological role, endonuclease IV plays a role in DNA repair. It cleaves phosphodiester bonds at apurinic or apyrimidinic (AP) sites, generating a 3'-hydroxyl group and a 5'-terminal sugar phosphate. The sequence is that of Probable endonuclease 4 from Shigella boydii serotype 4 (strain Sb227).